The chain runs to 210 residues: MVSSCCGSVCSDQGCGQDLCQETCCRPSCCETTCCRTTCCRPSCCVSSCCRPQCCQSVCCQPTCSRPSCCQTTCCRTTCYRPSCCVSSCCRPQCCQPACCQPTCCRPSCCETTCCHPRCCISSCCRPSCCVSSCCKPQCCQSVCCQPNCCRPSCSISSCCRPSCCESSCCRPCCCVRPVCGRVSCHTTCYRPTCVISSCPRPLCCASSCC.

Tandem repeats lie at residues 24–28 (CCRPS), 29–33 (CCETT), 34–38 (CCRTT), 39–43 (CCRPS), 44–48 (CCVSS), 49–53 (CCRPQ), 54–58 (CCQSV), 59–63 (CCQPT), 69–73 (CCQTT), 74–78 (CCRTT), 84–88 (CCVSS), 89–93 (CCRPQ), 94–98 (CCQPA), 99–103 (CCQPT), 104–108 (CCRPS), 109–113 (CCETT), 114–118 (CCHPR), 119–123 (CCISS), 124–128 (CCRPS), 129–133 (CCVSS), 134–138 (CCKPQ), 139–143 (CCQSV), 144–148 (CCQPN), 149–153 (CCRPS), 159–163 (CCRPS), 164–168 (CCESS), 169–173 (CCRPC), and 174–178 (CCVRP). The tract at residues 24-178 (CCRPSCCETT…CCRPCCCVRP (155 aa)) is 29 X 5 AA repeats of C-C-[RQVHIEK]-[SPTR]-[VSTQCRNP].

It belongs to the KRTAP type 4 family. Interacts with hair keratins. In terms of tissue distribution, expressed in the hair follicles.

In terms of biological role, in the hair cortex, hair keratin intermediate filaments are embedded in an interfilamentous matrix, consisting of hair keratin-associated proteins (KRTAP), which are essential for the formation of a rigid and resistant hair shaft through their extensive disulfide bond cross-linking with abundant cysteine residues of hair keratins. The matrix proteins include the high-sulfur and high-glycine-tyrosine keratins. The sequence is that of Keratin-associated protein 4-9 (KRTAP4-9) from Homo sapiens (Human).